Here is a 148-residue protein sequence, read N- to C-terminus: MHDSLTIALLQAREAAMSYFRPIVKRHNLTEQQWRIVRILAESPSMDFHDLAYRACILRPSLTGILTRMERDGLVLRLKPINDQRKLYISLTKEGQALYNRAQTQIEEAYRQIEAQFTAEKMQQLTHLLEEFIALGNSRQEDIPGDNE.

One can recognise an HTH marR-type domain in the interval 2-134 (HDSLTIALLQ…LTHLLEEFIA (133 aa)).

Its function is as follows. Repressor for the homoprotocatechuate catabolic pathway hpc operon. The chain is Homoprotocatechuate degradative operon repressor (hpcR) from Escherichia coli.